The primary structure comprises 437 residues: D-aminoacyl-tRNA deacylase (437 aa).

This sequence belongs to the DtdA deacylase family. As to quaternary structure, monomer. It depends on Zn(2+) as a cofactor.

The catalysed reaction is a D-aminoacyl-tRNA + H2O = a tRNA + a D-alpha-amino acid + H(+). The enzyme catalyses glycyl-tRNA(Ala) + H2O = tRNA(Ala) + glycine + H(+). D-aminoacyl-tRNA deacylase with broad substrate specificity. By recycling D-aminoacyl-tRNA to D-amino acids and free tRNA molecules, this enzyme counteracts the toxicity associated with the formation of D-aminoacyl-tRNA entities in vivo. This is D-aminoacyl-tRNA deacylase from Methanoculleus marisnigri (strain ATCC 35101 / DSM 1498 / JR1).